The following is a 318-amino-acid chain: Ribonuclease Z (318 aa).

Residues histidine 62, histidine 64, aspartate 66, histidine 67, histidine 140, aspartate 211, and histidine 269 each coordinate Zn(2+). Aspartate 66 acts as the Proton acceptor in catalysis.

It belongs to the RNase Z family. Homodimer. Requires Zn(2+) as cofactor.

The enzyme catalyses Endonucleolytic cleavage of RNA, removing extra 3' nucleotides from tRNA precursor, generating 3' termini of tRNAs. A 3'-hydroxy group is left at the tRNA terminus and a 5'-phosphoryl group is left at the trailer molecule.. In terms of biological role, zinc phosphodiesterase, which displays some tRNA 3'-processing endonuclease activity. Probably involved in tRNA maturation, by removing a 3'-trailer from precursor tRNA. This is Ribonuclease Z from Brevibacillus brevis (strain 47 / JCM 6285 / NBRC 100599).